The primary structure comprises 1748 residues: Flagellar attachment zone protein 1 (1748 aa).

Coiled-coil stretches lie at residues 613–657 (REQE…KLQK), 684–864 (VTLD…HKVR), and 903–1663 (NDHM…SALE). 41 repeat units span residues 1012–1025 (EELE…EKLA), 1026–1039 (EELE…EKLA), 1040–1053 (EELE…EKLA), 1054–1067 (EALD…EKLA), 1068–1081 (EELE…EKLA), 1082–1095 (EELE…EKLA), 1096–1109 (EELE…EKLA), 1110–1123 (EELE…EKLA), 1124–1137 (EELE…EKLA), 1138–1151 (EELE…EKLA), 1152–1165 (EALD…EKLA), 1166–1179 (EELD…EKLA), 1180–1193 (EELE…EKLA), 1194–1207 (EELE…EKLA), 1208–1221 (EELE…EKLA), 1222–1235 (EELE…EKLA), 1236–1249 (EELE…EKLA), 1250–1263 (EELE…EKLA), 1264–1277 (EELE…EKLA), 1278–1291 (EELE…EKLA), 1292–1305 (EELE…EKLA), 1306–1319 (EELE…EKLA), 1320–1333 (EELE…EKLA), 1334–1347 (EELE…EKLA), 1348–1361 (EELE…EKLA), 1362–1375 (EELE…EKLA), 1376–1389 (EELE…EKLA), 1390–1403 (EELE…EKLA), 1404–1417 (EELE…EKLA), 1418–1431 (EELE…EKLA), 1432–1445 (EELE…EKLA), 1446–1459 (EELE…EKLA), 1460–1473 (EELE…EKLA), 1474–1487 (EELE…EKLA), 1488–1501 (EELE…EKLA), 1502–1515 (EELE…EKLA), 1516–1529 (EELE…EKLA), 1530–1543 (EELE…EKLA), 1544–1557 (EELE…EKLA), 1558–1571 (EELE…EKLA), and 1572–1585 (EELE…KRLA). The segment at 1012 to 1529 (EELELKAAEN…LKAAENEKLA (518 aa)) is 41 X 14 AA tandem repeats of E-E-L-E-L-K-[VA]-A-E-N-E-K-L-A.

The protein localises to the cell projection. The protein resides in the cilium. It localises to the flagellum. Functionally, a component of FAZ filament that is required for correct FAZ assembly and attachment. Not essential for new flagellum growth. This is Flagellar attachment zone protein 1 from Trypanosoma brucei gambiense (strain MHOM/CI/86/DAL972).